The primary structure comprises 469 residues: Neuraminidase (469 aa).

The Intravirion portion of the chain corresponds to 1–9 (MNPNQKIIT). Residues 10–30 (IGSVSLTIATICFLMQIAILV) traverse the membrane as a helical segment. The interval 11–33 (GSVSLTIATICFLMQIAILVTTV) is involved in apical transport and lipid raft association. At 31-469 (TTVTLHFKQY…DGADINLMPI (439 aa)) the chain is on the virion surface side. Residues 36–88 (HFKQYECDSPANNQVMPCEPIIIERNITEIVYLTNTTIEKEICPKLVEYRNWS) are hypervariable stalk region. Residues Asn61, Asn70, and Asn86 are each glycosylated (N-linked (GlcNAc...) asparagine; by host). A head of neuraminidase region spans residues 91-469 (QCKITGFAPF…DGADINLMPI (379 aa)). 8 cysteine pairs are disulfide-bonded: Cys92-Cys417, Cys124-Cys129, Cys183-Cys230, Cys232-Cys237, Cys278-Cys291, Cys280-Cys289, Cys318-Cys337, and Cys421-Cys447. Arg118 lines the substrate pocket. A glycan (N-linked (GlcNAc...) asparagine; by host) is linked at Asn146. Asp151 serves as the catalytic Proton donor/acceptor. Arg152 serves as a coordination point for substrate. Residues Asn200 and Asn234 are each glycosylated (N-linked (GlcNAc...) asparagine; by host). 276–277 (EE) contacts substrate. Arg292 is a substrate binding site. Residues Asp293, Gly297, and Asp324 each contribute to the Ca(2+) site. Arg371 contributes to the substrate binding site. The N-linked (GlcNAc...) asparagine; by host glycan is linked to Asn402. Tyr406 (nucleophile) is an active-site residue.

Belongs to the glycosyl hydrolase 34 family. Homotetramer. Ca(2+) is required as a cofactor. In terms of processing, N-glycosylated.

Its subcellular location is the virion membrane. It is found in the host apical cell membrane. The catalysed reaction is Hydrolysis of alpha-(2-&gt;3)-, alpha-(2-&gt;6)-, alpha-(2-&gt;8)- glycosidic linkages of terminal sialic acid residues in oligosaccharides, glycoproteins, glycolipids, colominic acid and synthetic substrates.. With respect to regulation, inhibited by the neuraminidase inhibitors zanamivir (Relenza) and oseltamivir (Tamiflu). These drugs interfere with the release of progeny virus from infected cells and are effective against all influenza strains. Resistance to neuraminidase inhibitors is quite rare. Its function is as follows. Catalyzes the removal of terminal sialic acid residues from viral and cellular glycoconjugates. Cleaves off the terminal sialic acids on the glycosylated HA during virus budding to facilitate virus release. Additionally helps virus spread through the circulation by further removing sialic acids from the cell surface. These cleavages prevent self-aggregation and ensure the efficient spread of the progeny virus from cell to cell. Otherwise, infection would be limited to one round of replication. Described as a receptor-destroying enzyme because it cleaves a terminal sialic acid from the cellular receptors. May facilitate viral invasion of the upper airways by cleaving the sialic acid moieties on the mucin of the airway epithelial cells. Likely to plays a role in the budding process through its association with lipid rafts during intracellular transport. May additionally display a raft-association independent effect on budding. Plays a role in the determination of host range restriction on replication and virulence. Sialidase activity in late endosome/lysosome traffic seems to enhance virus replication. In Aves (whales), this protein is Neuraminidase.